Here is a 565-residue protein sequence, read N- to C-terminus: NAD-dependent malic enzyme (565 aa).

The active-site Proton donor is the Tyr104. An NAD(+)-binding site is contributed by Arg157. The Proton acceptor role is filled by Lys175. A divalent metal cation contacts are provided by Glu246, Asp247, and Asp270. NAD(+)-binding residues include Asp270 and Asn418.

It belongs to the malic enzymes family. In terms of assembly, homotetramer. Mg(2+) is required as a cofactor. Requires Mn(2+) as cofactor.

The catalysed reaction is (S)-malate + NAD(+) = pyruvate + CO2 + NADH. It catalyses the reaction oxaloacetate + H(+) = pyruvate + CO2. This chain is NAD-dependent malic enzyme, found in Shigella flexneri serotype 5b (strain 8401).